The primary structure comprises 525 residues: Cytochrome P450 714A2 (525 aa).

Residues Met-1 to Ser-3 lie on the Lumenal side of the membrane. A helical; Signal-anchor for type III membrane protein transmembrane segment spans residues Leu-4 to Gly-24. Residues Tyr-25–Val-525 lie on the Cytoplasmic side of the membrane. Residue Cys-475 participates in heme binding.

This sequence belongs to the cytochrome P450 family. Heme serves as cofactor. As to expression, expressed in the shoot apical meristem (SAM) and petioles of young leaves, in the leaf margin and petiole vein of cotyledons, and at low levels in the filaments of developing flowers. Not detected in siliques.

It localises to the endoplasmic reticulum membrane. Its function is as follows. Involved in the inactivation of early gibberellin (GA) intermediates. This is Cytochrome P450 714A2 (CYP714A2) from Arabidopsis thaliana (Mouse-ear cress).